The sequence spans 500 residues: Protein gar2 (500 aa).

2 stretches are compositionally biased toward basic and acidic residues: residues 1–41 (MAKK…KEIA) and 59–68 (KRASSPEPSK). The tract at residues 1–262 (MAKKDKTSVK…TKPSQDSNET (262 aa)) is disordered. Residues 69–78 (KSVKKQKKSK) show a composition bias toward basic residues. Residues 90–120 (ESSSSESESSSSESESSSSESESSSSESSSS) show a composition bias toward low complexity. Residues 126-137 (VIVKTEEKKESS) show a composition bias toward basic and acidic residues. A phosphoserine mark is found at S143, S144, and S146. The segment covering 152–163 (AVVKIEEKKESS) has biased composition (basic and acidic residues). Over residues 164–182 (SDSSSESSSSESESESSSS) the composition is skewed to low complexity. The segment covering 191–201 (VEKTEEKKEGS) has biased composition (basic and acidic residues). A compositionally biased stretch (low complexity) spans 202–218 (SESSSDSESSSDSSSES). Residues 219-233 (GDSDSSSDSESESSS) are compositionally biased toward acidic residues. Over residues 234–250 (EDEKKRKAEPASEERPA) the composition is skewed to basic and acidic residues. 2 consecutive RRM domains span residues 263 to 341 (CTVF…LSNP) and 366 to 443 (DTVF…FSTP). Residues 441–500 (STPRTGGGSRGGRGGFGGRGGFGGRGGFGGGRGRGRGGARSGNPNRGSVAPFSGNKVTFD) form a disordered region. The span at 445–480 (TGGGSRGGRGGFGGRGGFGGRGGFGGGRGRGRGGAR) shows a compositional bias: gly residues.

It belongs to the RRM GAR family.

The protein localises to the nucleus. It localises to the nucleolus. In terms of biological role, helps the assembly of pre-ribosomal particles containing 18S rRNA. The sequence is that of Protein gar2 (gar2) from Schizosaccharomyces pombe (strain 972 / ATCC 24843) (Fission yeast).